Reading from the N-terminus, the 141-residue chain is Holo-[acyl-carrier-protein] synthase (141 aa).

D8 and E61 together coordinate Mg(2+).

The protein belongs to the P-Pant transferase superfamily. AcpS family. Mg(2+) serves as cofactor.

It localises to the cytoplasm. The enzyme catalyses apo-[ACP] + CoA = holo-[ACP] + adenosine 3',5'-bisphosphate + H(+). In terms of biological role, transfers the 4'-phosphopantetheine moiety from coenzyme A to a Ser of acyl-carrier-protein. The protein is Holo-[acyl-carrier-protein] synthase of Rhodopseudomonas palustris (strain HaA2).